The primary structure comprises 340 residues: Probable dual-specificity RNA methyltransferase RlmN (340 aa).

The active-site Proton acceptor is Glu91. The 230-residue stretch at 97 to 326 (HSGRVTACIS…CEIRKEKGTD (230 aa)) folds into the Radical SAM core domain. Cys104 and Cys331 form a disulfide bridge. 3 residues coordinate [4Fe-4S] cluster: Cys111, Cys115, and Cys118. Residues 158-159 (GE), Ser190, 213-215 (SLH), and Asn289 contribute to the S-adenosyl-L-methionine site. Catalysis depends on Cys331, which acts as the S-methylcysteine intermediate.

It belongs to the radical SAM superfamily. RlmN family. The cofactor is [4Fe-4S] cluster.

The protein localises to the cytoplasm. The catalysed reaction is adenosine(2503) in 23S rRNA + 2 reduced [2Fe-2S]-[ferredoxin] + 2 S-adenosyl-L-methionine = 2-methyladenosine(2503) in 23S rRNA + 5'-deoxyadenosine + L-methionine + 2 oxidized [2Fe-2S]-[ferredoxin] + S-adenosyl-L-homocysteine. It catalyses the reaction adenosine(37) in tRNA + 2 reduced [2Fe-2S]-[ferredoxin] + 2 S-adenosyl-L-methionine = 2-methyladenosine(37) in tRNA + 5'-deoxyadenosine + L-methionine + 2 oxidized [2Fe-2S]-[ferredoxin] + S-adenosyl-L-homocysteine. Functionally, specifically methylates position 2 of adenine 2503 in 23S rRNA and position 2 of adenine 37 in tRNAs. In Thermosipho melanesiensis (strain DSM 12029 / CIP 104789 / BI429), this protein is Probable dual-specificity RNA methyltransferase RlmN.